The primary structure comprises 189 residues: Lipid A acyltransferase PagP (189 aa).

Residues 1-24 form the signal peptide; sequence MLRRFSLFSLGFLGWLLVSGNASA. Residues His61, Asp104, and Ser105 contribute to the active site.

It belongs to the lipid A palmitoyltransferase family. Homodimer.

The protein localises to the cell outer membrane. It catalyses the reaction a lipid A + a 1,2-diacyl-sn-glycero-3-phosphocholine = a hepta-acyl lipid A + a 2-acyl-sn-glycero-3-phosphocholine. The enzyme catalyses a lipid IVA + a 1,2-diacyl-sn-glycero-3-phosphocholine = a lipid IVB + a 2-acyl-sn-glycero-3-phosphocholine. The catalysed reaction is a lipid IIA + a 1,2-diacyl-sn-glycero-3-phosphocholine = a lipid IIB + a 2-acyl-sn-glycero-3-phosphocholine. Transfers a fatty acid residue from the sn-1 position of a phospholipid to the N-linked hydroxyfatty acid chain on the proximal unit of lipid A or its precursors. In Klebsiella pneumoniae subsp. pneumoniae (strain ATCC 700721 / MGH 78578), this protein is Lipid A acyltransferase PagP.